The primary structure comprises 422 residues: Replication factor C large subunit (422 aa).

63–70 contacts ATP; that stretch reads GPPGVGKT.

This sequence belongs to the activator 1 small subunits family. RfcL subfamily. As to quaternary structure, heteromultimer composed of small subunits (RfcS) and large subunits (RfcL).

Part of the RFC clamp loader complex which loads the PCNA sliding clamp onto DNA. The polypeptide is Replication factor C large subunit (Pyrobaculum aerophilum (strain ATCC 51768 / DSM 7523 / JCM 9630 / CIP 104966 / NBRC 100827 / IM2)).